A 344-amino-acid polypeptide reads, in one-letter code: uncharacterized protein (344 aa).

Positions 38 and 167 each coordinate NADP(+).

It belongs to the NAD(P)-dependent epimerase/dehydratase family. Dihydroflavonol-4-reductase subfamily.

This is an uncharacterized protein from Saccharomyces cerevisiae (strain ATCC 204508 / S288c) (Baker's yeast).